A 262-amino-acid chain; its full sequence is Abhydrolase domain-containing protein ACTT2-2 (262 aa).

Positions 260–262 (SKL) match the Peroxisomal targeting signal type 1 motif.

It belongs to the AB hydrolase superfamily. AKT2 hydrolase family.

Its subcellular location is the peroxisome. The protein operates within mycotoxin biosynthesis. In terms of biological role, abhydrolase domain-containing protein; part of the gene clusters that mediate the biosynthesis of the host-selective toxins (HSTs) ACT-toxins responsible for brown spot of tangerine disease by the tangerine pathotype which affects tangerines and mandarins. ACT-toxins consist of three moieties, 9,10-epoxy-8-hydroxy-9-methyl-decatrienoic acid (EDA), valine and a polyketide. ACT-toxin I is toxic to both citrus and pear; toxin II the 5''-deoxy derivative of ACT-toxin I, is highly toxic to pear and slightly toxic to citrus. On cellular level, ACT-toxins affect plasma membrane of susceptible cells and cause a sudden increase in loss of K(+) after a few minutes of toxin treatment. The acyl-CoA ligase ACTT1, the hydrolase ACTT2, the enoyl-CoA hydratases ACTT3 and ACTT6, and the acyl-CoA synthetase ACTT5 are all involved in the biosynthesis of the AK-, AF- and ACT-toxin common 9,10-epoxy-8-hydroxy-9-methyl-decatrienoic acid (EDA) structural moiety. The exact role of each enzyme, and of additional enzymes identified within the AF-toxin clusters have still to be determined. On the other hand, ACTTS1 to ACTTS4 are specific to the tangerine pathotype. The function of ACTTS3 is to elongate the polyketide chain portion of ACT-toxin that is unique to this toxin. The enoyl-reductase ACTTS2 might complement the missing enoyl-reductase (ER) domain in ACTTS3 in the synthesis of the polyketide portion of ACT-toxin. The roles of the nonribosomal peptide synthetases-related proteins ACTTS1 and ACTTS4 have also still not been elucidated. This is Abhydrolase domain-containing protein ACTT2-2 (ACTT2-2) from Alternaria alternata (Alternaria rot fungus).